We begin with the raw amino-acid sequence, 215 residues long: Imidazole glycerol phosphate synthase subunit HisH (215 aa).

Residues 7–215 form the Glutamine amidotransferase type-1 domain; sequence TIAVIDYGMG…LLKNFVEWQP (209 aa). Residue C86 is the Nucleophile of the active site. Residues H195 and E197 contribute to the active site.

As to quaternary structure, heterodimer of HisH and HisF.

It is found in the cytoplasm. The enzyme catalyses 5-[(5-phospho-1-deoxy-D-ribulos-1-ylimino)methylamino]-1-(5-phospho-beta-D-ribosyl)imidazole-4-carboxamide + L-glutamine = D-erythro-1-(imidazol-4-yl)glycerol 3-phosphate + 5-amino-1-(5-phospho-beta-D-ribosyl)imidazole-4-carboxamide + L-glutamate + H(+). It carries out the reaction L-glutamine + H2O = L-glutamate + NH4(+). It functions in the pathway amino-acid biosynthesis; L-histidine biosynthesis; L-histidine from 5-phospho-alpha-D-ribose 1-diphosphate: step 5/9. IGPS catalyzes the conversion of PRFAR and glutamine to IGP, AICAR and glutamate. The HisH subunit catalyzes the hydrolysis of glutamine to glutamate and ammonia as part of the synthesis of IGP and AICAR. The resulting ammonia molecule is channeled to the active site of HisF. This is Imidazole glycerol phosphate synthase subunit HisH from Dechloromonas aromatica (strain RCB).